The chain runs to 165 residues: Chorismate pyruvate-lyase (165 aa).

Substrate contacts are provided by Met35, Arg77, Leu115, and Glu156.

The protein belongs to the UbiC family. As to quaternary structure, monomer.

The protein localises to the cytoplasm. It catalyses the reaction chorismate = 4-hydroxybenzoate + pyruvate. The protein operates within cofactor biosynthesis; ubiquinone biosynthesis. Its function is as follows. Removes the pyruvyl group from chorismate, with concomitant aromatization of the ring, to provide 4-hydroxybenzoate (4HB) for the ubiquinone pathway. The chain is Chorismate pyruvate-lyase from Escherichia coli (strain K12 / MC4100 / BW2952).